The sequence spans 208 residues: Uridine kinase (208 aa).

An ATP-binding site is contributed by 11-18 (GGTGSGKS).

The protein belongs to the uridine kinase family.

The protein localises to the cytoplasm. It carries out the reaction uridine + ATP = UMP + ADP + H(+). The enzyme catalyses cytidine + ATP = CMP + ADP + H(+). It participates in pyrimidine metabolism; CTP biosynthesis via salvage pathway; CTP from cytidine: step 1/3. It functions in the pathway pyrimidine metabolism; UMP biosynthesis via salvage pathway; UMP from uridine: step 1/1. In Alkaliphilus metalliredigens (strain QYMF), this protein is Uridine kinase.